Here is a 227-residue protein sequence, read N- to C-terminus: Fibrillarin-like rRNA/tRNA 2'-O-methyltransferase (227 aa).

S-adenosyl-L-methionine-binding positions include 86 to 87 (TT), 105 to 106 (EF), 130 to 131 (DA), and 150 to 153 (DVAQ).

The protein belongs to the methyltransferase superfamily. Fibrillarin family. Interacts with nop5. Component of box C/D small ribonucleoprotein (sRNP) particles that contain rpl7ae, FlpA and nop5, plus a guide RNA.

Its function is as follows. Involved in pre-rRNA and tRNA processing. Utilizes the methyl donor S-adenosyl-L-methionine to catalyze the site-specific 2'-hydroxyl methylation of ribose moieties in rRNA and tRNA. Site specificity is provided by a guide RNA that base pairs with the substrate. Methylation occurs at a characteristic distance from the sequence involved in base pairing with the guide RNA. The sequence is that of Fibrillarin-like rRNA/tRNA 2'-O-methyltransferase from Pyrococcus abyssi (strain GE5 / Orsay).